We begin with the raw amino-acid sequence, 310 residues long: MFSSSMFPHLILPAIGSSKVRTMVLPFAFVGFFIFPICLASLLDWNDAYEYPKYSFEWSNVSILEGDIDSIKEKTEKTKLSSLFYAGKHEYFCVYPNASLIKQNSTTEPSYDLQELRIQGTEKINELANVFLIENRGYWTYDYVYGQHVRQYHLEPQQGSDKVLANPMYILGTAPNTQTKKNLEENWAIGFVEGKAYLQTTFRNGTMCDITKRPRHVILSYECSTNSDTPEITQYQEVSSCAYSMTIHVPGLCSLPAFKIQEDIPSEKIVCYNVIKEKSNEVDHKDSQHVVDEVAQTSPPEVKEVETQSS.

An N-terminal signal peptide occupies residues 1 to 40 (MFSSSMFPHLILPAIGSSKVRTMVLPFAFVGFFIFPICLA). Residues Asn60, Asn97, and Asn104 are each glycosylated (N-linked (GlcNAc...) asparagine). One can recognise an MRH domain in the interval 129-255 (NVFLIENRGY…TIHVPGLCSL (127 aa)). Positions 139 and 151 each coordinate a mannooligosaccharide derivative. N-linked (GlcNAc...) asparagine glycosylation is present at Asn204. Intrachain disulfides connect Cys208/Cys241 and Cys223/Cys253. 4 residues coordinate a mannooligosaccharide derivative: Asp209, Arg215, Glu237, and Tyr243. Basic and acidic residues-rich tracts occupy residues 282–292 (VDHKDSQHVVD) and 301–310 (EVKEVETQSS). The interval 282–310 (VDHKDSQHVVDEVAQTSPPEVKEVETQSS) is disordered.

It belongs to the OS-9 family. Interacts with missfolded ER lumenal proteins.

The protein resides in the endoplasmic reticulum membrane. In terms of biological role, lectin involved in the quality control of the secretory pathway. As a member of the endoplasmic reticulum-associated degradation lumenal (ERAD-L) surveillance system, targets misfolded endoplasmic reticulum lumenal glycoproteins for degradation. In Schizosaccharomyces pombe (strain 972 / ATCC 24843) (Fission yeast), this protein is Protein OS-9 homolog (yos9).